Reading from the N-terminus, the 580-residue chain is 2-succinyl-5-enolpyruvyl-6-hydroxy-3-cyclohexene-1-carboxylate synthase (580 aa).

Belongs to the TPP enzyme family. MenD subfamily. In terms of assembly, homodimer. Mg(2+) serves as cofactor. The cofactor is Mn(2+). It depends on thiamine diphosphate as a cofactor.

The enzyme catalyses isochorismate + 2-oxoglutarate + H(+) = 5-enolpyruvoyl-6-hydroxy-2-succinyl-cyclohex-3-ene-1-carboxylate + CO2. It functions in the pathway quinol/quinone metabolism; 1,4-dihydroxy-2-naphthoate biosynthesis; 1,4-dihydroxy-2-naphthoate from chorismate: step 2/7. Its pathway is quinol/quinone metabolism; menaquinone biosynthesis. Its function is as follows. Catalyzes the thiamine diphosphate-dependent decarboxylation of 2-oxoglutarate and the subsequent addition of the resulting succinic semialdehyde-thiamine pyrophosphate anion to isochorismate to yield 2-succinyl-5-enolpyruvyl-6-hydroxy-3-cyclohexene-1-carboxylate (SEPHCHC). This Listeria monocytogenes serotype 4b (strain F2365) protein is 2-succinyl-5-enolpyruvyl-6-hydroxy-3-cyclohexene-1-carboxylate synthase.